Here is a 124-residue protein sequence, read N- to C-terminus: uncharacterized protein (124 aa).

This sequence belongs to the YciI family.

This is an uncharacterized protein from Rhizobium meliloti (strain 1021) (Ensifer meliloti).